The sequence spans 520 residues: L-tyrosine:2-oxoglutarate aminotransferase amt1 (520 aa).

This sequence belongs to the class-I pyridoxal-phosphate-dependent aminotransferase family. Requires pyridoxal 5'-phosphate as cofactor.

The catalysed reaction is L-tyrosine + 2-oxoglutarate = 3-(4-hydroxyphenyl)pyruvate + L-glutamate. Its pathway is secondary metabolite biosynthesis. An L-tyrosine:2-oxoglutarate aminotransferase (probably amt1) and atromentin synthetase nps3 catalyze consecutive steps to turn over L-tyrosine into atromentin, which represents the generic precursor molecule for the entire terphenylquinone and pulvinic acid family of pigments, which are widely distributed secondary metabolites in homobasidiomycetes. The first step catalyzed by amt1 converts L-tyrosine in to 4-hydroxyphenylpyruvate (4-HPP). Adenylation of two 4-HPP monomers by the nps3 adenylation (A) domain, covalent tethering of the monomers as a thioester and oxoester onto the nps3 thiolation (T) and thioesterase (TE) domains, respectively, and symmetric C-C-bond formation between two monomers catalyzed by the nps3 TE domain leads to atromentin. Follow-up products of atromentin in S.lacrymans include atromentic acid, xerocomic acid, isoxerocomic acid and variegatic acid. This Serpula lacrymans var. lacrymans (strain S7.9) (Dry rot fungus) protein is L-tyrosine:2-oxoglutarate aminotransferase amt1 (amt1).